The chain runs to 943 residues: MEYNFREIEKKWQKIWVDNHTYQVNEDASKQKFYVLNMFPYPSGAGLHVGHPLGYIASDIYARYKRLQGFNVLNPMGYDAYGLPAEQYAIQTGQHPAITTVNNINRYREQLDKIGFSFDWNREIRTCDPEYYHWTQWAFIKMFNSYYCNDEKQARPIEELIEAFSTNGTQGMNVACGEEMDFTADEWNAKSEKEQQEILMNYRIAYLGNTMVNWCPALGTVLANDEVVDGVSERGGYPVIQKVMRQWCLRVSAYAQRLLDGLETVEWTDSLKETQRNWIGRSEGAEMNFKVKDSDIEFTIFTTRADTVFGVTFMVLAPESELVAKLTTPEQKAEVDAYLDRTKKRTERERIADRSVSGVFSGSYAINPLTNEPIPVWISDYVLAGYGTGAIMAVPAHDSRDYAFAKHFNLEIRPLIEGCDVSEESFDAKEGIMMNSPRPGAPEGGLVLNGLTVKEAIAKTKEYIKATGLGRVKVNFRLRDAIFSRQRYWGEPFPVYYKDGMPYMIDESCLPLELPEVAKFLPTETGEPPLGHATKWAWDTVNKCVTDNENIDNITIFPLELNTMPGFAGSSAYYLRYMDPRNHEALVSPAVDQYWKNVDLYVGGTEHATGHLIYSRFWNKFLHDWGISVAEEPFQKLVNQGMIQGRSNFVYRIKDTNTFVSLNLKDQYEVTPIHVDVNIVSNDILDLEAFKAWRPEYETAEFILEDGKYICGWAVEKMSKSMFNVVNPDMIVEKYGADTLRMYEMFLGPVEQSKPWDTNGIDGVHRFIKKFWSLFYDRNGEYLVKDEPATKEELKALHKLIKKVTGDIEQFSYNTSVSAFMICVNELSSLKCNKKEVLEQLIVVLAPFAPHVCEELWDTLGSTTSVCDAQWPAFNEQYLVEDTVNYTISFNGKARFNMEFPANAASDAIQATVLADERSLKWTEGKTPKKVIVVPKKIVNIVI.

Residues 40–51 carry the 'HIGH' region motif; it reads PYPSGAGLHVGH. Positions 717 to 721 match the 'KMSKS' region motif; that stretch reads KMSKS. Lys720 provides a ligand contact to ATP.

This sequence belongs to the class-I aminoacyl-tRNA synthetase family.

It localises to the cytoplasm. The catalysed reaction is tRNA(Leu) + L-leucine + ATP = L-leucyl-tRNA(Leu) + AMP + diphosphate. The sequence is that of Leucine--tRNA ligase from Bacteroides fragilis (strain ATCC 25285 / DSM 2151 / CCUG 4856 / JCM 11019 / LMG 10263 / NCTC 9343 / Onslow / VPI 2553 / EN-2).